A 182-amino-acid chain; its full sequence is Large ribosomal subunit protein uL16 (182 aa).

This sequence belongs to the universal ribosomal protein uL16 family.

In Thermococcus gammatolerans (strain DSM 15229 / JCM 11827 / EJ3), this protein is Large ribosomal subunit protein uL16.